A 219-amino-acid chain; its full sequence is MTDHRTRFLQLALDADALRFGEFTLKSGRLSPYFFNAGRFDSGAKTAQLAQCYADAIEAAGLDFDLLFGPAYKGIPLATALACAYAGRGRDLPLAFNRKEAKDHGEGGTLIGAPLAGRQVLIVDDVITAGTAIREALAIIRAAGGTPSGIAVALDRQEIASDQDRRSAAQAVAAEAGIPVIAVANLGDLLAFAAGNADLVGFQEPLLAYRGRYGTDTTG.

K26 is a binding site for 5-phospho-alpha-D-ribose 1-diphosphate. Orotate is bound at residue 34–35; that stretch reads FF. 5-phospho-alpha-D-ribose 1-diphosphate is bound by residues 72 to 73, R98, K99, K102, H104, and 124 to 132; these read YK and DDVITAGTA. T128 and R156 together coordinate orotate.

The protein belongs to the purine/pyrimidine phosphoribosyltransferase family. PyrE subfamily. In terms of assembly, homodimer. Mg(2+) is required as a cofactor.

It carries out the reaction orotidine 5'-phosphate + diphosphate = orotate + 5-phospho-alpha-D-ribose 1-diphosphate. The protein operates within pyrimidine metabolism; UMP biosynthesis via de novo pathway; UMP from orotate: step 1/2. In terms of biological role, catalyzes the transfer of a ribosyl phosphate group from 5-phosphoribose 1-diphosphate to orotate, leading to the formation of orotidine monophosphate (OMP). In Xanthomonas axonopodis pv. citri (strain 306), this protein is Orotate phosphoribosyltransferase.